The chain runs to 189 residues: MENIEYLNEIQAVAGKLIHSYGVPVMITLFLRWLASIVAVFLMILDQTKWKYSNNIMASLLAPYLFSSLPIVIFQVLRNGVGKWIALLTVILRLFLPNHFHESLEIPGATILLIVVTPSDIGAIFRDDLRYTGGDVCLLTSFYLINKHTKACGGIKNSFTQKDKVTYSICLWILFVYPILSSFAALFYL.

The Extracellular portion of the chain corresponds to 1-24 (MENIEYLNEIQAVAGKLIHSYGVP). Residues 25–45 (VMITLFLRWLASIVAVFLMIL) traverse the membrane as a helical segment. Residues 46-55 (DQTKWKYSNN) are Cytoplasmic-facing. Residues 56 to 76 (IMASLLAPYLFSSLPIVIFQV) form a helical membrane-spanning segment. At 77 to 79 (LRN) the chain is on the extracellular side. A helical transmembrane segment spans residues 80–100 (GVGKWIALLTVILRLFLPNHF). At 101–104 (HESL) the chain is on the cytoplasmic side. A helical transmembrane segment spans residues 105–125 (EIPGATILLIVVTPSDIGAIF). Residues 126 to 168 (RDDLRYTGGDVCLLTSFYLINKHTKACGGIKNSFTQKDKVTYS) lie on the Extracellular side of the membrane. The helical transmembrane segment at 169–189 (ICLWILFVYPILSSFAALFYL) threads the bilayer.

It belongs to the Cold-regulated 413 protein family.

The protein localises to the cell membrane. The chain is Cold-regulated 413 plasma membrane protein 3 from Arabidopsis thaliana (Mouse-ear cress).